A 780-amino-acid polypeptide reads, in one-letter code: Endonuclease MutS2 (780 aa).

334 to 341 (GPNAGGKT) is a binding site for ATP. One can recognise a Smr domain in the interval 706-780 (IDIRGMRSVD…GGSGKTIVEI (75 aa)).

It belongs to the DNA mismatch repair MutS family. MutS2 subfamily. Homodimer. Binds to stalled ribosomes, contacting rRNA.

Endonuclease that is involved in the suppression of homologous recombination and thus may have a key role in the control of bacterial genetic diversity. Functionally, acts as a ribosome collision sensor, splitting the ribosome into its 2 subunits. Detects stalled/collided 70S ribosomes which it binds and splits by an ATP-hydrolysis driven conformational change. Acts upstream of the ribosome quality control system (RQC), a ribosome-associated complex that mediates the extraction of incompletely synthesized nascent chains from stalled ribosomes and their subsequent degradation. Probably generates substrates for RQC. The protein is Endonuclease MutS2 of Borreliella burgdorferi (strain ATCC 35210 / DSM 4680 / CIP 102532 / B31) (Borrelia burgdorferi).